Here is a 176-residue protein sequence, read N- to C-terminus: Large ribosomal subunit protein uL16 (176 aa).

It belongs to the universal ribosomal protein uL16 family.

This Halorubrum lacusprofundi (strain ATCC 49239 / DSM 5036 / JCM 8891 / ACAM 34) protein is Large ribosomal subunit protein uL16.